Here is a 234-residue protein sequence, read N- to C-terminus: Thymidylate kinase (234 aa).

20–27 (GIDASGKT) is a binding site for ATP.

This sequence belongs to the thymidylate kinase family.

The enzyme catalyses dTMP + ATP = dTDP + ADP. Phosphorylation of dTMP to form dTDP in both de novo and salvage pathways of dTTP synthesis. The protein is Thymidylate kinase of Mycoplasmopsis pulmonis (strain UAB CTIP) (Mycoplasma pulmonis).